The primary structure comprises 64 residues: MKQKTHKGTAKRIKVTGSGKLRRERAYRRHLLEGKPSTRTRRLKGTTDVSAADNKRMKRLLGKA.

A disordered region spans residues 1 to 20; that stretch reads MKQKTHKGTAKRIKVTGSGK.

Belongs to the bacterial ribosomal protein bL35 family.

This Corynebacterium urealyticum (strain ATCC 43042 / DSM 7109) protein is Large ribosomal subunit protein bL35.